The sequence spans 700 residues: MPKEHKKRGRREDQKKRKRDHDDESASKRFRKDDIEHVQAENPLQHVANDAPRQDAAPFYGMLDEQEQEYFKKADEMLELNQFESPEDRRIFLASVWKEAEGKELKMATSQTSRLLERLILLASEDQLKSLFQKFSGHFLNLVQNRFASHCCETLFIQAAPAVSQENASVKTEALNTPPASDPDEIIVSMENLFLYTLGELEGNIGFLMTEKYASHVLRVLLVILSGEPLEKQGKSVTQSKKKEKVTISGAGDERILEKRVVPESFLEALEKVISDSVSGIEAHYLRSLAIHPLGGPTLQLLLKLELSHFGKSRAKDEKSIIHRLLPDNPIAEGTESAILINGLVYDSVGSHLLETIIEHAPGKLFKQIYGEFFKERMGSLARNEIAGYVVGKILERLGKDDLEEAMRQIVDQIPSLVERNRTAPIKTLIERCVAREVDCSPIKAQLETAYAGPHGFEVTRILKLNEDDGKPRARHGESNEKVHGSLLAQTMMTVDGPLGQLVFDSLANLSPELSIQLARDGTASRTLQAALVSRNATVIFRRKMIQQFYGKIGELALDPKASHVVDAIWYGTVGLAFIRERIAEELAENENSLRESQVGRKVWKNWQMDLYKRRRNDWVAQARTTAGNEVFQSFPDESQSDVAAPARTHRASRHMSAIELARQKFAAAKAAQAKDGKKPKKGNNPTNGSGETPRSLVAQ.

The tract at residues 1-49 is disordered; the sequence is MPKEHKKRGRREDQKKRKRDHDDESASKRFRKDDIEHVQAENPLQHVAN. Over residues 10 to 39 the composition is skewed to basic and acidic residues; the sequence is RREDQKKRKRDHDDESASKRFRKDDIEHVQ. Pumilio repeat units follow at residues 200 to 239, 336 to 371, 372 to 412, and 509 to 547; these read ELEGNIGFLMTEKYASHVLRVLLVILSGEPLEKQGKSVTQ, ESAILINGLVYDSVGSHLLETIIEHAPGKLFKQIYG, EFFK…QIVD, and NLSPELSIQLARDGTASRTLQAALVSRNATVIFRRKMIQ. Disordered stretches follow at residues 634 to 655 and 667 to 700; these read SFPDESQSDVAAPARTHRASRH and AAAKAAQAKDGKKPKKGNNPTNGSGETPRSLVAQ. A compositionally biased stretch (polar residues) spans 684–700; sequence NNPTNGSGETPRSLVAQ.

Belongs to the NOP9 family.

It is found in the nucleus. The protein localises to the nucleolus. Functionally, RNA-binding nucleolar protein required for pre-rRNA processing. Involved in production of 18S rRNA and assembly of small ribosomal subunit. In Pyrenophora tritici-repentis (strain Pt-1C-BFP) (Wheat tan spot fungus), this protein is Nucleolar protein 9 (nop9).